Consider the following 471-residue polypeptide: Secretogranin-3 (471 aa).

The signal sequence occupies residues Met1 to Ala22. 4 disordered regions span residues Pro24–Ser73, Lys92–Asp145, Ala208–Glu231, and Lys345–Lys405. Basic and acidic residues predominate over residues Gly28–Leu45. Ser40 bears the Phosphoserine mark. Residue Ser40 is glycosylated (O-linked (Xyl...) (chondroitin sulfate) serine). Residues Pro62 to Ser73 show a composition bias toward low complexity. Composition is skewed to basic and acidic residues over residues Leu106–His142, Ala214–Glu231, Lys345–Ser355, and Glu363–Lys405. The residue at position 365 (Ser365) is a Phosphoserine.

Interacts with CHGA. Interacts with secretogranin II/SCG2. Interacts (via C-terminus) with CPE. Expression restricted to the brain and pituitary gland. Not detected in the adrenal gland.

It localises to the cytoplasmic vesicle. The protein localises to the secretory vesicle. Its subcellular location is the secretory vesicle membrane. It is found in the secreted. Its function is as follows. Member of the granin protein family that regulates the biogenesis of secretory granules. Acts as a sorting receptor for intragranular proteins including chromogranin A/CHGA. May also play a role in angiogenesis. Promotes endothelial proliferation, migration and tube formation through MEK/ERK signaling pathway. The sequence is that of Secretogranin-3 (Scg3) from Rattus norvegicus (Rat).